Reading from the N-terminus, the 191-residue chain is MAEPLLVVGLGNPGANYARTRHNLGFVVADLLAARLGAKFKAHKRSGAEVATGRSAGRSLVLAKPRCYMNESGRQIGPLAKFYSVAPANIIVIHDDLDLEFGRIRLKIGGGEGGHNGLRSVVAALGTKDFQRVRIGIGRPPGRKDPAAFVLENFTPAERAEVPTICEQAADATELLIEQGMEPAQNRVHAW.

Residue Tyr-17 participates in tRNA binding. Catalysis depends on His-22, which acts as the Proton acceptor. Residues Tyr-68, Asn-70, and Asn-116 each coordinate tRNA.

The protein belongs to the PTH family. As to quaternary structure, monomer.

Its subcellular location is the cytoplasm. It carries out the reaction an N-acyl-L-alpha-aminoacyl-tRNA + H2O = an N-acyl-L-amino acid + a tRNA + H(+). In terms of biological role, hydrolyzes ribosome-free peptidyl-tRNAs (with 1 or more amino acids incorporated), which drop off the ribosome during protein synthesis, or as a result of ribosome stalling. Functionally, catalyzes the release of premature peptidyl moieties from peptidyl-tRNA molecules trapped in stalled 50S ribosomal subunits, and thus maintains levels of free tRNAs and 50S ribosomes. The polypeptide is Peptidyl-tRNA hydrolase (Mycobacterium tuberculosis (strain ATCC 25177 / H37Ra)).